The primary structure comprises 288 residues: Proteasome assembly chaperone 1 (288 aa).

Positions 1–33 (MATFFGEVQSVFSRAVDEEEEDEDDDEEEEEDR) are disordered. The span at 17–33 (DEEEEDEDDDEEEEEDR) shows a compositional bias: acidic residues.

It belongs to the PSMG1 family. Forms a heterodimer with psmg2. Degraded by the proteasome upon completion of 20S proteasome maturation.

The protein resides in the cytoplasm. It is found in the endoplasmic reticulum. Chaperone protein which promotes assembly of the 20S proteasome as part of a heterodimer with psmg2. The polypeptide is Proteasome assembly chaperone 1 (Xenopus laevis (African clawed frog)).